A 772-amino-acid chain; its full sequence is MNCYLLLRFMLGIPLLWPCLGATENSQTKKVKQPVRSHLRVKRGWVWNQFFVPEEMNTTSHHIGQLRSDLDNGNNSFQYKLLGAGAGSTFIIDERTGDIYAIQKLDREERSLYILRAQVIDIATGRAVEPESEFVIKVSDINDNEPKFLDEPYEAIVPEMSPEGTLVIQVTASDADDPSSGNNARLLYSLLQGQPYFSVEPTTGVIRISSKMDRELQDEYWVIIQAKDMIGQPGALSGTTSVLIKLSDVNDNKPIFKESLYRLTVSESAPTGTSIGTIMAYDNDIGENAEMDYSIEEDDSQTFDIITNHETQEGIVILKKKVDFEHQNHYGIRAKVKNHHVPEQLMKYHTEASTTFIKIQVEDVDEPPLFLLPYYVFEVFEETPQGSFVGVVSATDPDNRKSPIRYSITRSKVFNINDNGTITTSNSLDREISAWYNLSITATEKYNIEQISSIPLYVQVLNINDHAPEFSQYYETYVCENAGSGQVIQTISAVDRDESIEEHHFYFNLSVEDTNNSSFTIIDNQDNTAVILTNRTGFNLQEEPVFYISILIADNGIPSLTSTNTLTIHVCDCGDSGSTQTCQYQELVLSMGFKTEVIIAILICIMIIFGFIFLTLGLKQRRKQILFPEKSEDFRENIFQYDDEGGGEEDTEAFDIAELRSSTIMRERKTRKTTSAEIRSLYRQSLQVGPDSAIFRKFILEKLEEANTDPCAPPFDSLQTYAFEGTGSLAGSLSSLESAVSDQDESYDYLNELGPRFKRLACMFGSAVQSNN.

The N-terminal stretch at 1–21 is a signal peptide; that stretch reads MNCYLLLRFMLGIPLLWPCLG. Residues 22 to 43 constitute a propeptide that is removed on maturation; that stretch reads ATENSQTKKVKQPVRSHLRVKR. 5 Cadherin domains span residues 44–148, 149–256, 257–370, 371–470, and 470–581; these read GWVW…EPKF, LDEP…KPIF, KESL…PPLF, LLPY…APEF, and FSQY…STQT. Topologically, residues 44 to 596 are extracellular; that stretch reads GWVWNQFFVP…LVLSMGFKTE (553 aa). 2 N-linked (GlcNAc...) asparagine glycosylation sites follow: asparagine 57 and asparagine 74. 6 N-linked (GlcNAc...) asparagine glycosylation sites follow: asparagine 419, asparagine 437, asparagine 508, asparagine 515, asparagine 516, and asparagine 534. A helical transmembrane segment spans residues 597-617; sequence VIIAILICIMIIFGFIFLTLG. Residues 618 to 772 lie on the Cytoplasmic side of the membrane; that stretch reads LKQRRKQILF…MFGSAVQSNN (155 aa).

In terms of tissue distribution, expressed in many tissues, with the exception of uterus.

The protein localises to the cell membrane. Its function is as follows. Cadherins are calcium-dependent cell adhesion proteins. They preferentially interact with themselves in a homophilic manner in connecting cells; cadherins may thus contribute to the sorting of heterogeneous cell types. This is Cadherin-19 (CDH19) from Homo sapiens (Human).